Consider the following 252-residue polypeptide: Cytochrome b6-f complex iron-sulfur subunit, chloroplastic (252 aa).

The helical transmembrane segment at 94-114 threads the bilayer; sequence LVLAAVAPVVASAGGCYLYYF. Residues 141 to 235 enclose the Rieske domain; that stretch reads WFKSHKKNAR…VEDDNGKILL (95 aa). [2Fe-2S] cluster is bound by residues Cys181, His183, Cys199, and His202. Cys186 and Cys201 are oxidised to a cystine.

The protein belongs to the Rieske iron-sulfur protein family. As to quaternary structure, the 4 large subunits of the cytochrome b6-f complex are cytochrome b6, subunit IV (17 kDa polypeptide, petD), cytochrome f and the Rieske protein, while the 4 small subunits are petG, petL, petM and petN. The complex functions as a dimer. Requires [2Fe-2S] cluster as cofactor.

It is found in the plastid. It localises to the chloroplast thylakoid membrane. It catalyses the reaction 2 oxidized [plastocyanin] + a plastoquinol + 2 H(+)(in) = 2 reduced [plastocyanin] + a plastoquinone + 4 H(+)(out). Functionally, component of the cytochrome b6-f complex, which mediates electron transfer between photosystem II (PSII) and photosystem I (PSI), cyclic electron flow around PSI, and state transitions. This chain is Cytochrome b6-f complex iron-sulfur subunit, chloroplastic (petC), found in Bigelowiella natans (Pedinomonas minutissima).